The chain runs to 161 residues: Succinate dehydrogenase assembly factor 2, mitochondrial (161 aa).

The transit peptide at 1-31 (MSLLRVTRSSGHLSAVCRLPARSISTTSILL) directs the protein to the mitochondrion.

The protein belongs to the SDHAF2 family. As to quaternary structure, interacts with the flavoprotein subunit within the SDH catalytic dimer.

Its subcellular location is the mitochondrion matrix. Its function is as follows. Plays an essential role in the assembly of succinate dehydrogenase (SDH), an enzyme complex (also referred to as respiratory complex II) that is a component of both the tricarboxylic acid (TCA) cycle and the mitochondrial electron transport chain, and which couples the oxidation of succinate to fumarate with the reduction of ubiquinone (coenzyme Q) to ubiquinol. Required for flavinylation (covalent attachment of FAD) of the flavoprotein subunit of the SDH catalytic dimer. In Aedes aegypti (Yellowfever mosquito), this protein is Succinate dehydrogenase assembly factor 2, mitochondrial.